The chain runs to 140 residues: UPF0225 protein SAV_6631 (140 aa).

Residues 1 to 22 (MSKSRRTRSTSRPTSRPQPASC) form a disordered region. Residues 10 to 19 (TSRPTSRPQP) show a composition bias toward low complexity.

Belongs to the UPF0225 family.

In Streptomyces avermitilis (strain ATCC 31267 / DSM 46492 / JCM 5070 / NBRC 14893 / NCIMB 12804 / NRRL 8165 / MA-4680), this protein is UPF0225 protein SAV_6631.